We begin with the raw amino-acid sequence, 420 residues long: D-tagatose-1,6-bisphosphate aldolase subunit GatZ (420 aa).

It belongs to the GatZ/KbaZ family. GatZ subfamily. As to quaternary structure, forms a complex with GatY.

Its pathway is carbohydrate metabolism; D-tagatose 6-phosphate degradation; D-glyceraldehyde 3-phosphate and glycerone phosphate from D-tagatose 6-phosphate: step 2/2. Functionally, component of the tagatose-1,6-bisphosphate aldolase GatYZ that is required for full activity and stability of the Y subunit. Could have a chaperone-like function for the proper and stable folding of GatY. When expressed alone, GatZ does not show any aldolase activity. Is involved in the catabolism of galactitol. This chain is D-tagatose-1,6-bisphosphate aldolase subunit GatZ, found in Escherichia coli (strain SE11).